Consider the following 139-residue polypeptide: D-ribose pyranase (139 aa).

His-20 functions as the Proton donor in the catalytic mechanism. Residues Asp-28, His-106, and 128 to 130 (FAN) contribute to the substrate site.

This sequence belongs to the RbsD / FucU family. RbsD subfamily. In terms of assembly, homodecamer.

Its subcellular location is the cytoplasm. The catalysed reaction is beta-D-ribopyranose = beta-D-ribofuranose. The protein operates within carbohydrate metabolism; D-ribose degradation; D-ribose 5-phosphate from beta-D-ribopyranose: step 1/2. In terms of biological role, catalyzes the interconversion of beta-pyran and beta-furan forms of D-ribose. This chain is D-ribose pyranase, found in Yersinia pseudotuberculosis serotype O:1b (strain IP 31758).